We begin with the raw amino-acid sequence, 108 residues long: UPF0102 protein Tpet_0671 (108 aa).

The protein belongs to the UPF0102 family.

In Thermotoga petrophila (strain ATCC BAA-488 / DSM 13995 / JCM 10881 / RKU-1), this protein is UPF0102 protein Tpet_0671.